The following is a 359-amino-acid chain: Protein PAM71-homolog, chloroplastic (359 aa).

The transit peptide at 1 to 66 (MKLTSLSKNA…DLLWGKFRVR (66 aa)) directs the protein to the chloroplast. Positions 71–102 (GVGSGSYSGGEEDGSQSSSLDQSPATSSESLK) are disordered. The segment covering 85–98 (SQSSSLDQSPATSS) has biased composition (low complexity). Transmembrane regions (helical) follow at residues 110–130 (SLSI…ITFV), 149–169 (AFSL…AALL), 177–197 (LVLL…VVIG), 207–227 (FQTT…FFGL), 269–289 (LTNP…AEWG), 311–331 (GAIA…AFLA), and 339–359 (VGYV…FGVF).

This sequence belongs to the GDT1 family.

Its subcellular location is the plastid. The protein localises to the chloroplast membrane. Its function is as follows. Probable chloroplast-localized Mn(2+)/H(+) and/or Ca(2+)/H(+) antiporter regulating Ca(2+), Mn(2+) and pH homeostasis. The protein is Protein PAM71-homolog, chloroplastic of Arabidopsis thaliana (Mouse-ear cress).